A 504-amino-acid polypeptide reads, in one-letter code: CDK5 regulatory subunit-associated protein 3 (504 aa).

Short sequence motifs (shuffled ATG8-binding motif) lie at residues 266 to 269 (IDWG), 290 to 293 (IDWG), and 308 to 311 (IDWG). Residues 268 to 504 (WGDFGLEAVS…RPVNLMGTSV (237 aa)) are required for interaction with UFL1 and mediates interaction with CHEK1. An RPL10a-binding domain (RBD) region spans residues 353–368 (DELMELEIFLSQRAVE). Residue Lys-448 forms a Glycyl lysine isopeptide (Lys-Gly) (interchain with G-Cter in SUMO2) linkage.

The protein belongs to the CDK5RAP3 family. In terms of assembly, substrate adapter component of the UFM1 ribosome E3 ligase (UREL) complex, composed of UFL1, DDRGK1 and CDK5RAP3. Interaction with UFL1 anchors CDK5RAP3 in the cytoplasm, preventing its translocation to the nucleus which allows expression of the CCND1 cyclin and progression of cells through the G1/S transition. Interacts with ATG8 family proteins MAP1LC3A, MAP1LC3B, GABARAP, GABARAPL1 and GABARAPL2. Interacts with CDK5R1; competes with CDK5RAP1 and CDK5RAP2. Interacts with RELA. Interacts with CHEK1; may negatively regulate CHEK1 and thereby stimulate entry into mitosis. Interacts with CDKN2A/ARF and MDM2; forms a ternary complex involved in regulation of p53/TP53. Interacts with MAPK14. Interacts with CCNB1. Interacts with TUBG1; may regulate CDK5RAP3 in mitotic G2/M transition checkpoint. Post-translationally, may be phosphorylated by CDK5. Ubiquitinated. Probably triggers proteasomal degradation and is negatively regulated by UFL1. In terms of processing, may be ufmylated. Post-translationally, cleaved by caspases early during apoptosis, the resulting peptides may play a role in rupture of the nuclear envelope. In terms of tissue distribution, expressed in vascular endothelium. Up-regulated in failing heart. Highly expressed in the ventricular section in subacute and chronic ischemic heart failure.

It localises to the endoplasmic reticulum membrane. The protein resides in the cytoplasm. It is found in the nucleus. The protein localises to the cytoskeleton. Its subcellular location is the microtubule organizing center. It localises to the centrosome. Its function is as follows. Substrate adapter of E3 ligase complexes mediating ufmylation, the covalent attachment of the ubiquitin-like modifier UFM1 to substrate proteins, and which is involved in various processes, such as ribosome recycling and reticulophagy (also called ER-phagy). As part of the UREL complex, plays a key role in ribosome recycling by promoting mono-ufmylation of RPL26/uL24 subunit of the 60S ribosome. Ufmylation of RPL26/uL24 occurs on free 60S ribosomes following ribosome dissociation: it weakens the junction between post-termination 60S subunits and SEC61 translocons, promoting release and recycling of the large ribosomal subunit from the endoplasmic reticulum membrane. Ufmylation of RPL26/uL24 and subsequent 60S ribosome recycling either take place after normal termination of translation or after ribosome stalling during cotranslational translocation at the endoplasmic reticulum. Within the UREL complex, CDK5RAP3 acts as a substrate adapter that constrains UFL1 ligase activity to mono-ufmylate RPL26/uL24 at 'Lys-134'. The UREL complex is also involved in reticulophagy in response to endoplasmic reticulum stress by promoting ufmylation of proteins such as CYB5R3, thereby promoting lysosomal degradation of ufmylated proteins. Also acts as a regulator of transcription: negatively regulates NF-kappa-B-mediated gene transcription through the control of RELA phosphorylation. Also regulates mitotic G2/M transition checkpoint and mitotic G2 DNA damage checkpoint. Through its interaction with CDKN2A/ARF and MDM2 may induce MDM2-dependent p53/TP53 ubiquitination, stabilization and activation in the nucleus, thereby promoting G1 cell cycle arrest and inhibition of cell proliferation. May also play a role in the rupture of the nuclear envelope during apoptosis. May regulate MAPK14 activity by regulating its dephosphorylation by PPM1D/WIP1. Required for liver development. This chain is CDK5 regulatory subunit-associated protein 3, found in Rattus norvegicus (Rat).